Consider the following 269-residue polypeptide: Tryptophan synthase alpha chain (269 aa).

Active-site proton acceptor residues include glutamate 49 and aspartate 60.

Belongs to the TrpA family. In terms of assembly, tetramer of two alpha and two beta chains.

The catalysed reaction is (1S,2R)-1-C-(indol-3-yl)glycerol 3-phosphate + L-serine = D-glyceraldehyde 3-phosphate + L-tryptophan + H2O. Its pathway is amino-acid biosynthesis; L-tryptophan biosynthesis; L-tryptophan from chorismate: step 5/5. Its function is as follows. The alpha subunit is responsible for the aldol cleavage of indoleglycerol phosphate to indole and glyceraldehyde 3-phosphate. In Actinobacillus pleuropneumoniae serotype 3 (strain JL03), this protein is Tryptophan synthase alpha chain.